We begin with the raw amino-acid sequence, 93 residues long: Protein BOLA2 (93 aa).

Position 29 is an S-glutathionyl cysteine; transient; alternate (C29). A disordered region spans residues K72–A93.

The protein belongs to the bolA/yrbA family. As to quaternary structure, homodimer. Interacts in vitro with GRXS14, GRXS15, GRXS16 and GRXS17, but not with GRXC5. Interacts in vivo only with GRXS17. Post-translationally, can be either glutathionylated or forming covalent homodimers, depending on the oxidation state.

Its subcellular location is the cytoplasm. The protein resides in the nucleus. In terms of biological role, may act either alone or in interaction with glutaredoxin as a redox-regulated transcriptional regulator, or as a factor regulating Fe-S cluster biogenesis. The GRXS17-BOLA2 heterodimer binds a labile, oxygen sensitive iron-sulfur cluster. The polypeptide is Protein BOLA2 (Arabidopsis thaliana (Mouse-ear cress)).